The sequence spans 236 residues: Pyridoxal 5'-phosphate synthase subunit PdxT (236 aa).

61–63 contributes to the L-glutamine binding site; it reads GES. The active-site Nucleophile is Cys93. L-glutamine is bound by residues Arg127 and 163–164; that span reads IR. Active-site charge relay system residues include His215 and Glu217.

The protein belongs to the glutaminase PdxT/SNO family. In the presence of PdxS, forms a dodecamer of heterodimers. Only shows activity in the heterodimer.

It carries out the reaction aldehydo-D-ribose 5-phosphate + D-glyceraldehyde 3-phosphate + L-glutamine = pyridoxal 5'-phosphate + L-glutamate + phosphate + 3 H2O + H(+). The enzyme catalyses L-glutamine + H2O = L-glutamate + NH4(+). It functions in the pathway cofactor biosynthesis; pyridoxal 5'-phosphate biosynthesis. In terms of biological role, catalyzes the hydrolysis of glutamine to glutamate and ammonia as part of the biosynthesis of pyridoxal 5'-phosphate. The resulting ammonia molecule is channeled to the active site of PdxS. The protein is Pyridoxal 5'-phosphate synthase subunit PdxT of Pseudarthrobacter chlorophenolicus (strain ATCC 700700 / DSM 12829 / CIP 107037 / JCM 12360 / KCTC 9906 / NCIMB 13794 / A6) (Arthrobacter chlorophenolicus).